We begin with the raw amino-acid sequence, 359 residues long: 4-galactosyl-N-acetylglucosaminide 3-alpha-L-fucosyltransferase 9 (359 aa).

The Cytoplasmic portion of the chain corresponds to 1–11 (MTSTSKGILRP). The chain crosses the membrane as a helical; Signal-anchor for type II membrane protein span at residues 12 to 32 (FLIVCIILGCFMACLLIYIKP). Residues 33-359 (TNSWVFSPME…VGNLEKWFWN (327 aa)) are Lumenal-facing. N-linked (GlcNAc...) asparagine glycosylation is present at N62. Residues 63–168 (ETTILVWVWP…RRDSDIQVPY (106 aa)) form an acceptor-binding region. An a beta-D-galactosyl-(1-&gt;4)-N-acetyl-beta-D-glucosaminyl derivative-binding site is contributed by Q75. 3 disulfides stabilise this stretch: C82/C335, C91/C338, and C190/C238. N101 is a glycosylation site (N-linked (GlcNAc...) asparagine). E137 serves as a coordination point for a beta-D-galactosyl-(1-&gt;4)-N-acetyl-beta-D-glucosaminyl derivative. Catalysis depends on E137, which acts as the Nucleophile. E137 lines the GDP-beta-L-fucose pocket. An N-linked (GlcNAc...) asparagine glycan is attached at N153. Y168, V192, S194, N195, R202, V226, Y241, N246, Y252, E255, and K256 together coordinate GDP-beta-L-fucose. The tract at residues 169–326 (GFLTVSTNPF…NWRKDFTVNL (158 aa)) is donor-binding. The interval 327–359 (PRFWESHACLACDHVKRHQEYKSVGNLEKWFWN) is acceptor-binding.

It belongs to the glycosyltransferase 10 family. Homodimer. In terms of processing, N-glycosylated with complex-type N-glycans. Mainly detected in brain and kidney.

The protein resides in the golgi apparatus. It is found in the trans-Golgi network membrane. Its subcellular location is the golgi apparatus membrane. It catalyses the reaction a beta-D-galactosyl-(1-&gt;4)-N-acetyl-beta-D-glucosaminyl derivative + GDP-beta-L-fucose = a beta-D-galactosyl-(1-&gt;4)-[alpha-L-fucosyl-(1-&gt;3)]-N-acetyl-beta-D-glucosaminyl derivative + GDP + H(+). The catalysed reaction is an alpha-Neu5Ac-(2-&gt;3)-beta-D-Gal-(1-&gt;4)-beta-D-GlcNAc-(1-&gt;3)-beta-D-Gal-(1-&gt;4)-beta-D-GlcNAc derivative + GDP-beta-L-fucose = an alpha-Neu5Ac-(2-&gt;3)-beta-D-Gal-(1-&gt;4)-beta-D-GlcNAc-(1-&gt;3)-beta-D-Gal-(1-&gt;4)-[alpha-L-Fuc-(1-&gt;3)]-beta-D-GlcNAc derivative + GDP + H(+). It carries out the reaction alpha-N-glycoloylneuraminosyl-(2-&gt;3)-beta-D-galactosyl-(1-&gt;4)-N-acetyl-beta-D-glucosaminyl-(1-&gt;3)-beta-D-galactosyl-(1-&gt;4)-N-acetyl-beta-D-glucosaminyl-(1-&gt;3)-beta-D-galactosyl-(1-&gt;4)-beta-D-glucosyl-(1&lt;-&gt;1')-ceramide + GDP-beta-L-fucose = alpha-N-glycoloylneuraminosyl-(2-&gt;3)-beta-D-galactosyl-(1-&gt;4)-N-acetyl-beta-D-glucosaminyl-(1-&gt;3)-beta-D-galactosyl-(1-&gt;4)-[alpha-L-fucosyl-(1-&gt;3)]-N-acetyl-beta-D-glucosaminyl-(1-&gt;3)-beta-D-galactosyl-(1-&gt;4)-beta-D-glucosyl-(1&lt;-&gt;1')-ceramide + GDP + H(+). The enzyme catalyses alpha-D-galactosyl-(1-&gt;3)-beta-D-galactosyl-(1-&gt;4)-N-acetyl-beta-D-glucosaminyl-(1-&gt;3)-beta-D-galactosyl-(1-&gt;4)-beta-D-glucosyl-(1&lt;-&gt;1')-ceramide + GDP-beta-L-fucose = a neolactoside IV(3)-alpha-Gal,III(3)-alpha-Fuc-nLc4Cer + GDP + H(+). It catalyses the reaction a neolactoside nLc4Cer + GDP-beta-L-fucose = a neolactoside III(3)-alpha-Fuc-nLc4Cer + GDP + H(+). The catalysed reaction is an N-acetyl-alpha-neuraminyl-(2-&gt;3)-beta-D-galactosyl-(1-&gt;4)-N-acetyl-beta-D-glucosaminyl derivative + GDP-beta-L-fucose = an alpha-Neu5Ac-(2-&gt;3)-beta-D-Gal-(1-&gt;4)-[alpha-L-Fuc-(1-&gt;3)]-beta-D-GlcNAc derivative + GDP + H(+). It carries out the reaction beta-D-Gal-(1-&gt;4)-beta-D-GlcNAc-(1-&gt;3)-beta-D-Gal-(1-&gt;4)-D-Glc + GDP-beta-L-fucose = beta-D-Gal-(1-&gt;4)-[alpha-L-Fuc-(1-&gt;3)]-beta-D-GlcNAc-(1-&gt;3)-beta-D-Gal-(1-&gt;4)-D-Glc + GDP + H(+). The enzyme catalyses an alpha-L-Fuc-(1-&gt;2)-beta-D-Gal-(1-&gt;4)-beta-D-GlcNAc derivative + GDP-beta-L-fucose = an alpha-L-Fuc-(1-&gt;2)-beta-D-Gal-(1-&gt;4)-[alpha-L-Fuc-(1-&gt;3)]-beta-D-GlcNAc derivative + GDP + H(+). It participates in protein modification; protein glycosylation. The protein operates within glycolipid biosynthesis. With respect to regulation, activated by Mn2+. Functionally, catalyzes alpha(1-&gt;3) linkage of fucosyl moiety transferred from GDP-beta-L-fucose to N-acetyl glucosamine (GlcNAc) within type 2 lactosamine (LacNAc, beta-D-Gal-(1-&gt;4)-beta-D-GlcNAc-) glycan attached to glycolipids and N- or O-linked glycoproteins. Fucosylates distal type 2 LacNAc and its fucosylated (H-type 2 LacNAc) and sialylated (sialyl-type 2 LacNAc) derivatives to form Lewis x (Lex) (CD15) and Lewis y (Ley) antigenic epitopes involved in cell adhesion and differentiation. Generates Lex epitopes in the brain, presumably playing a role in the maintenance of neuronal stemness and neurite outgrowth in progenitor neural cells. Fucosylates the internal type 2 LacNAc unit of the polylactosamine chain to form VIM-2 antigen that serves as recognition epitope for SELE. Can also modify milk oligosaccharides in particular type 2 tetrasaccharide LNnT. The sequence is that of 4-galactosyl-N-acetylglucosaminide 3-alpha-L-fucosyltransferase 9 from Mus musculus (Mouse).